The primary structure comprises 202 residues: Dephospho-CoA kinase (202 aa).

Positions 3-202 (TIGITGGIGS…TKRPNPPDRL (200 aa)) constitute a DPCK domain. Position 11 to 16 (11 to 16 (GSGKSV)) interacts with ATP. The tract at residues 138–161 (RAMARDGSSAETMRQRMLSQEREQ) is disordered.

Belongs to the CoaE family.

The protein localises to the cytoplasm. The enzyme catalyses 3'-dephospho-CoA + ATP = ADP + CoA + H(+). It functions in the pathway cofactor biosynthesis; coenzyme A biosynthesis; CoA from (R)-pantothenate: step 5/5. Its function is as follows. Catalyzes the phosphorylation of the 3'-hydroxyl group of dephosphocoenzyme A to form coenzyme A. The protein is Dephospho-CoA kinase of Porphyromonas gingivalis (strain ATCC BAA-308 / W83).